Reading from the N-terminus, the 94-residue chain is MLELNLQLFAHKKGGGSTSNGRDSQAKRLGAKASDGELVSGGSILFRQRGTHIHPGTNVGRGGDHTLFAKIEGTVKFEMKRGKKHVSVYPVVAK.

The propeptide occupies Met1 to Phe9. Residues Lys12–Ala33 form a disordered region.

It belongs to the bacterial ribosomal protein bL27 family. Post-translationally, the N-terminus is cleaved by ribosomal processing cysteine protease Prp.

This chain is Large ribosomal subunit protein bL27, found in Lactococcus lactis subsp. lactis (strain IL1403) (Streptococcus lactis).